Reading from the N-terminus, the 128-residue chain is Small ribosomal subunit protein uS14m (128 aa).

The protein belongs to the universal ribosomal protein uS14 family. In terms of assembly, component of the mitochondrial small ribosomal subunit (mt-SSU). Mature mammalian 55S mitochondrial ribosomes consist of a small (28S) and a large (39S) subunit. The 28S small subunit contains a 12S ribosomal RNA (12S mt-rRNA) and 30 different proteins. The 39S large subunit contains a 16S rRNA (16S mt-rRNA), a copy of mitochondrial valine transfer RNA (mt-tRNA(Val)), which plays an integral structural role, and 52 different proteins. Interacts with LIAT1.

It localises to the mitochondrion. The protein is Small ribosomal subunit protein uS14m of Homo sapiens (Human).